Reading from the N-terminus, the 609-residue chain is MCVGIECHGFGDKPAWMDRGARQKAEAAKMKQKVTQVARNRRMNQFRDQNESSLNRIHNRRTSNSQPSTRSINNTTTIPASNNEPLALSQPPSASSQNQVEKDQLSTYHQDSINVAIDPLDTIDSSLPDFQTVFDEINFLTDQTFDLPEIDWTSTNNVPITDNTANMGVTNGLRAGQYVPRSQKQIDMDFSPRDSPSMLTISDVEDAALLAYYVSKVFHWQFRFCSSTMSGFNQGYFIWLMSKSRPLYLASLALSSSYRSFQNNAKEPQPCLKYEEHMQRYDIATEELQGHLKGHTPMNDVTMLACIVSFISSSFLHSGRIDGNVHLKAGVSLIAPRISRQQSGTLSDVHKTPEESSRDFLTGSIIRFDILSAITRDTVPSLSDSYRRILRSSSPSILLETVSGCQNWVFDILLDVYALRDWKRNTRAVGLLSLWELTAKANMIKSDLERRITSNLMLMNESKQEVKTQEDENLQSRHYKHEICVVTHTFACAVSILLEVIVSGAYPQVPEIKQKVGRALESFAYIEDPDILEVLTWPLFVVGCVVEEDHHECFRQLLSSTQLVRSIGLYGLKEILEKCWKSRETGEIKDESFDFSHFHTYKSREILIA.

Positions Met-1–Cys-7 form a DNA-binding region, zn(2)-C6 fungal-type. The tract at residues Phe-46 to Gln-104 is disordered. Residues Glu-51–Glu-84 show a composition bias toward polar residues. Positions Pro-85–Gln-97 are enriched in low complexity.

It belongs to the TRI10 transcription regulator family.

It localises to the nucleus. Its function is as follows. Transcription factor; part of the gene cluster that mediates the biosynthesis of meroterpenoids. The sequence is that of Transcription factor ntnD from Nectria sp.